The sequence spans 115 residues: Large ribosomal subunit protein bL20 (115 aa).

Belongs to the bacterial ribosomal protein bL20 family.

Binds directly to 23S ribosomal RNA and is necessary for the in vitro assembly process of the 50S ribosomal subunit. It is not involved in the protein synthesizing functions of that subunit. The chain is Large ribosomal subunit protein bL20 from Prochlorococcus marinus (strain MIT 9215).